Reading from the N-terminus, the 1191-residue chain is Protogenin (1191 aa).

Positions 1–23 (MAPPVRPGMLPLLLLLLLPPLGS) are cleaved as a signal peptide. 4 Ig-like domains span residues 24-124 (VPGV…AHLT), 126-216 (STIS…ASLT), 229-316 (PTII…ATLT), and 321-405 (PSFV…ARLT). The Extracellular segment spans residues 24 to 943 (VPGVWSFSEL…YYHLDQKSMT (920 aa)). 2 disulfides stabilise this stretch: C54-C107 and C150-C199. N-linked (GlcNAc...) asparagine glycosylation occurs at N237. 2 disulfide bridges follow: C250/C298 and C342/C389. Fibronectin type-III domains follow at residues 415-509 (APYN…TLED), 511-607 (PLRP…TPKA), 612-711 (APKS…VRDR), 718-811 (PPHH…TLPE), and 816-911 (PPVG…VLPK). The N-linked (GlcNAc...) asparagine glycan is linked to N624. Residues 944-964 (GIAVGVGIALTCILICVLILI) traverse the membrane as a helical segment. Residues 965–1191 (YRSKARKSSA…LRYAAEGFPV (227 aa)) lie on the Cytoplasmic side of the membrane. Disordered regions lie at residues 975–1010 (SKTAQSGTQPLSQASASVAAGSDMGKNLERATETAE) and 1079–1191 (ISDE…GFPV). Residues 977–990 (TAQSGTQPLSQASA) are compositionally biased toward polar residues. Residues 1104–1132 (DTEHSANSEGSHETGDSGRFSHESNDEIH) are compositionally biased toward basic and acidic residues. Polar residues-rich tracts occupy residues 1135–1146 (SVISSTPPTSNP) and 1171–1180 (EQTSAPQTSA).

It belongs to the immunoglobulin superfamily. DCC family. From mid-gastrulation to early somite stages, restricted to posterior neural plate and mesoderm with an anterior limit at the level of the rhombencephalon. Posterior restriction is progressively lost during somitogenesis. Expression is maintained in the neural tube and paraxial mesoderm during this process. As development proceeds, further restricted to the dorsal parts of the spinal cord and somites. In parallel, expression progresses caudally during axis elongation.

It localises to the membrane. Functionally, may play a role in anteroposterior axis elongation. The polypeptide is Protogenin (Mus musculus (Mouse)).